We begin with the raw amino-acid sequence, 410 residues long: Phosphopentomutase (410 aa).

Residues Asp10, Asp309, His314, Asp350, His351, and His362 each coordinate Mn(2+).

It belongs to the phosphopentomutase family. Requires Mn(2+) as cofactor.

It localises to the cytoplasm. It carries out the reaction 2-deoxy-alpha-D-ribose 1-phosphate = 2-deoxy-D-ribose 5-phosphate. It catalyses the reaction alpha-D-ribose 1-phosphate = D-ribose 5-phosphate. It participates in carbohydrate degradation; 2-deoxy-D-ribose 1-phosphate degradation; D-glyceraldehyde 3-phosphate and acetaldehyde from 2-deoxy-alpha-D-ribose 1-phosphate: step 1/2. Isomerase that catalyzes the conversion of deoxy-ribose 1-phosphate (dRib-1-P) and ribose 1-phosphate (Rib-1-P) to deoxy-ribose 5-phosphate (dRib-5-P) and ribose 5-phosphate (Rib-5-P), respectively. This is Phosphopentomutase from Aliivibrio fischeri (strain ATCC 700601 / ES114) (Vibrio fischeri).